We begin with the raw amino-acid sequence, 68 residues long: UPF0253 protein AHA_2115 (68 aa).

Belongs to the UPF0253 family.

The chain is UPF0253 protein AHA_2115 from Aeromonas hydrophila subsp. hydrophila (strain ATCC 7966 / DSM 30187 / BCRC 13018 / CCUG 14551 / JCM 1027 / KCTC 2358 / NCIMB 9240 / NCTC 8049).